The chain runs to 426 residues: Phosphomethylpyrimidine synthase (426 aa).

Substrate-binding positions include N65, M94, Y123, H162, S184–G186, D225–R228, and E264. Residue H268 participates in Zn(2+) binding. Y291 contributes to the substrate binding site. Zn(2+) is bound at residue H332. The [4Fe-4S] cluster site is built by C408, C411, and C415.

The protein belongs to the ThiC family. [4Fe-4S] cluster is required as a cofactor.

The enzyme catalyses 5-amino-1-(5-phospho-beta-D-ribosyl)imidazole + S-adenosyl-L-methionine = 4-amino-2-methyl-5-(phosphooxymethyl)pyrimidine + CO + 5'-deoxyadenosine + formate + L-methionine + 3 H(+). It functions in the pathway cofactor biosynthesis; thiamine diphosphate biosynthesis. Its function is as follows. Catalyzes the synthesis of the hydroxymethylpyrimidine phosphate (HMP-P) moiety of thiamine from aminoimidazole ribotide (AIR) in a radical S-adenosyl-L-methionine (SAM)-dependent reaction. This Methanococcus maripaludis (strain C5 / ATCC BAA-1333) protein is Phosphomethylpyrimidine synthase.